Here is a 107-residue protein sequence, read N- to C-terminus: Antimicrobial peptide microplusin (107 aa).

An N-terminal signal peptide occupies residues 1–19; it reads MKSLLVCLVLAVVVLVASG. 3 cysteine pairs are disulfide-bonded: Cys25–Cys60, Cys38–Cys88, and Cys49–Cys54. The tract at residues 86–107 is disordered; the sequence is TDCDHSHGHEHSHGHEHGHGHH. Positions 87-107 are enriched in basic and acidic residues; that stretch reads DCDHSHGHEHSHGHEHGHGHH.

It localises to the secreted. Has bacteriostatic activity against Gram-positive bacteria, but not against Gram-negative bacteria. Has fungistatic activity against some but not all fungi. Binds and sequesters copper and iron ions. Copper-chelating is crucial for antimicrobial activity against M.luteus. This Ixodes scapularis (Black-legged tick) protein is Antimicrobial peptide microplusin.